The following is a 105-amino-acid chain: uncharacterized protein (105 aa).

This is an uncharacterized protein from Saccharolobus islandicus (Sulfolobus islandicus).